The primary structure comprises 290 residues: Agmatinase (290 aa).

Residues His112, Asp135, His137, Asp139, Asp216, and Asp218 each contribute to the Mn(2+) site.

This sequence belongs to the arginase family. Agmatinase subfamily. Mn(2+) is required as a cofactor.

The enzyme catalyses agmatine + H2O = urea + putrescine. It participates in amine and polyamine biosynthesis; putrescine biosynthesis via agmatine pathway; putrescine from agmatine: step 1/1. Catalyzes the formation of putrescine from agmatine. This chain is Agmatinase (speB), found in Bacillus anthracis.